The sequence spans 354 residues: Rhodopsin (354 aa).

Residues 1-36 (MNGTEGPNFYIPMSNKTGVVRSPFEYPQYYLAEPWQ) lie on the Extracellular side of the membrane. Residues Asn-2 and Asn-15 are each glycosylated (N-linked (GlcNAc...) asparagine). A helical transmembrane segment spans residues 37 to 61 (YSILCAYMFLLILLGFPINFMTLYV). The Cytoplasmic portion of the chain corresponds to 62–73 (TIQHKKLRTPLN). A helical membrane pass occupies residues 74–96 (YILLNLAFANHFMVLCGFTVTMY). At 97–110 (SSMNGYFILGATGC) the chain is on the extracellular side. Cys-110 and Cys-187 are oxidised to a cystine. Residues 111 to 133 (YVEGFFATLGGEIALWSLVVLAI) form a helical membrane-spanning segment. Positions 134-136 (ERY) match the 'Ionic lock' involved in activated form stabilization motif. Residues 134–152 (ERYVVVCKPMSNFRFSENH) are Cytoplasmic-facing. A helical transmembrane segment spans residues 153 to 173 (AVMGVAFTWIMALSCAVPPLL). Residues 174-202 (GWSRYIPEGMQCSCGVDYYTLKPEVNNES) lie on the Extracellular side of the membrane. The chain crosses the membrane as a helical span at residues 203-224 (FVIYMFVVHFTIPLIIIFFCYG). Topologically, residues 225 to 252 (RLVCTVKEAAAQQQESATTQKAEKEVTR) are cytoplasmic. Residues 253–274 (MVIIMVVFFLICWVPYASVAFF) form a helical membrane-spanning segment. At 275 to 286 (IFSNQGSEFGPI) the chain is on the extracellular side. The chain crosses the membrane as a helical span at residues 287–308 (FMTVPAFFAKSSSIYNPVIYIM). Lys-296 carries the N6-(retinylidene)lysine modification. Residues 309-354 (LNKQFRNCMITTLCCGKNPFGEDDASSAATSKTEASSVSSSQVSPA) are Cytoplasmic-facing. Residues Cys-322 and Cys-323 are each lipidated (S-palmitoyl cysteine). Residues 331 to 354 (DDASSAATSKTEASSVSSSQVSPA) are disordered. Low complexity predominate over residues 334–354 (SSAATSKTEASSVSSSQVSPA).

The protein belongs to the G-protein coupled receptor 1 family. Opsin subfamily. In terms of processing, contains one covalently linked retinal chromophore. Upon light absorption, the covalently bound 11-cis-retinal is converted to all-trans-retinal. After hydrolysis of the Schiff base and release of the covalently bound all-trans-retinal, active rhodopsin is regenerated by binding of a fresh molecule of 11-cis-retinal.

The protein resides in the membrane. The protein localises to the cell projection. Its subcellular location is the cilium. It is found in the photoreceptor outer segment. Photoreceptor required for image-forming vision at low light intensity. Required for photoreceptor cell viability after birth. Light-induced isomerization of 11-cis to all-trans retinal triggers a conformational change that activates signaling via G-proteins. Subsequent receptor phosphorylation mediates displacement of the bound G-protein alpha subunit by arrestin and terminates signaling. The chain is Rhodopsin (RHO) from Bufo bufo (European toad).